A 680-amino-acid chain; its full sequence is Fermitin family homolog 2 (680 aa).

Residues 40 to 81 (HIGGVMLKLVEKLDVKKDWSDHALWWEKKRTWLLKTHWTLDK) form an interaction with membranes containing phosphatidylinositol phosphate region. The segment at 141 to 162 (LKKPRDPTKKKKKKLDDQSEDE) is disordered. Phosphoserine occurs at positions 159, 181, 339, and 351. The FERM domain maps to 189–661 (MTPTYDAHDG…GYIFLSTRAK (473 aa)). Residues 380-476 (KVFKPKKLTL…WMAACRLASK (97 aa)) form the PH domain. Lys-383 contacts a 1,2-diacyl-sn-glycero-3-phospho-(1D-myo-inositol-3,4,5-trisphosphate). Ser-666 bears the Phosphoserine mark.

It belongs to the kindlin family. In terms of assembly, interacts with ITGB1; the interaction is inhibited in presence of ITGB1BP1. Interacts with FBLIM1. Interacts with active, unphosphorylated CTNNB1. Identified in a complex with CTNNB1 and TCF7L2/TCF4. Interacts with ILK, ITGB1 and ITGB3. In terms of tissue distribution, detected in adult heart muscle (at protein level). Detected in heart, skeletal muscle and testis.

Its subcellular location is the cytoplasm. The protein resides in the cell cortex. The protein localises to the cytoskeleton. It is found in the stress fiber. It localises to the cell junction. Its subcellular location is the focal adhesion. The protein resides in the membrane. The protein localises to the cell projection. It is found in the lamellipodium membrane. It localises to the nucleus. Its subcellular location is the myofibril. The protein resides in the sarcomere. The protein localises to the i band. It is found in the cell surface. Scaffolding protein that enhances integrin activation mediated by TLN1 and/or TLN2, but activates integrins only weakly by itself. Binds to membranes enriched in phosphoinositides. Enhances integrin-mediated cell adhesion onto the extracellular matrix and cell spreading; this requires both its ability to interact with integrins and with phospholipid membranes. Required for the assembly of focal adhesions. Participates in the connection between extracellular matrix adhesion sites and the actin cytoskeleton and also in the orchestration of actin assembly and cell shape modulation. Recruits FBLIM1 to focal adhesions. Plays a role in the TGFB1 and integrin signaling pathways. Stabilizes active CTNNB1 and plays a role in the regulation of transcription mediated by CTNNB1 and TCF7L2/TCF4 and in Wnt signaling. The chain is Fermitin family homolog 2 (Fermt2) from Mus musculus (Mouse).